Here is a 327-residue protein sequence, read N- to C-terminus: Undecaprenyl-phosphate 4-deoxy-4-formamido-L-arabinose transferase (327 aa).

Over 1–235 (MFDAAPIKKV…TCLTTTPLRL (235 aa)) the chain is Cytoplasmic. The chain crosses the membrane as a helical span at residues 236-256 (LSLLGSVIAIGGFSLSVLLIV). The Periplasmic segment spans residues 257 to 269 (LRLALGPQWAAEG). Residues 270–290 (VFMLFAVLFTFIGAQFIGMGL) form a helical membrane-spanning segment. The Cytoplasmic portion of the chain corresponds to 291–327 (LGEYIGRIYNDVRARPRYFVQQVIYPESTPFTEESHQ).

Belongs to the glycosyltransferase 2 family.

It is found in the cell inner membrane. It catalyses the reaction UDP-4-deoxy-4-formamido-beta-L-arabinose + di-trans,octa-cis-undecaprenyl phosphate = 4-deoxy-4-formamido-alpha-L-arabinopyranosyl di-trans,octa-cis-undecaprenyl phosphate + UDP. It functions in the pathway glycolipid biosynthesis; 4-amino-4-deoxy-alpha-L-arabinose undecaprenyl phosphate biosynthesis; 4-amino-4-deoxy-alpha-L-arabinose undecaprenyl phosphate from UDP-4-deoxy-4-formamido-beta-L-arabinose and undecaprenyl phosphate: step 1/2. It participates in bacterial outer membrane biogenesis; lipopolysaccharide biosynthesis. Functionally, catalyzes the transfer of 4-deoxy-4-formamido-L-arabinose from UDP to undecaprenyl phosphate. The modified arabinose is attached to lipid A and is required for resistance to polymyxin and cationic antimicrobial peptides. The sequence is that of Undecaprenyl-phosphate 4-deoxy-4-formamido-L-arabinose transferase from Salmonella dublin (strain CT_02021853).